The chain runs to 808 residues: Protein NLP5 (808 aa).

Positions 56-68 (PTQDTSNSLSQMY) are enriched in polar residues. The interval 56-83 (PTQDTSNSLSQMYGQDCPERSSLEDQNQ) is disordered. An RWP-RK domain is found at 536–617 (NRVTEKKRTK…IDSVEGVSGH (82 aa)). Residues 660–680 (SPGSSCSHSSSCSSETQVIKE) form a disordered region. The segment covering 663-673 (SSCSHSSSCSS) has biased composition (low complexity). A PB1 domain is found at 710 to 793 (FLRVKVSYEE…QTIKLLLQLS (84 aa)).

It is found in the nucleus. Functionally, probable transcription factor. The polypeptide is Protein NLP5 (NLP5) (Arabidopsis thaliana (Mouse-ear cress)).